We begin with the raw amino-acid sequence, 353 residues long: Replication-associated protein (353 aa).

The 109-residue stretch at 8 to 116 folds into the CRESS-DNA virus Rep endonuclease domain; the sequence is RVQSKNYFLT…DGVTIEWGQF (109 aa). The RCR-1 motif lies at 15–18; sequence FLTY. Glu-49, His-57, and His-59 together coordinate a divalent metal cation. The short motif at 57-59 is the RCR-2 element; sequence HLH. Tyr-103 acts as the For DNA cleavage activity in catalysis. Residues 103–106 carry the RCR-3 motif; that stretch reads YIDK. Asp-107 contacts a divalent metal cation. A binding to RBR1 region spans residues 143–153; sequence IESALTILKEE. The segment at 156 to 176 is oligomerization; it reads KDYVLQNHNIRSNLERIFFKV. 222 to 229 serves as a coordination point for ATP; sequence GDSRTGKT.

It belongs to the geminiviridae Rep protein family. Homooligomer. Interacts with the replication enhancer protein (REn). Interacts with host retinoblastoma-related protein 1 (RBR1), and may thereby induce the transcription of host replicative enzymes even if the cell is not dividing anymore. Interacts with host PCNA. Interacts with host SCE1 protein. Binds to host RAD54 protein to ensure geminiviral replication. Mg(2+) is required as a cofactor. The cofactor is Mn(2+).

Its subcellular location is the host nucleus. Its function is as follows. Essential for the replication of viral ssDNA. The closed circular ssDNA genome is first converted to a superhelical dsDNA. Rep binds a specific region at the genome origin of replication. It introduces an endonucleolytic nick within the conserved sequence 5'-TAATATTAC-3' in the intergenic region of the genome present in all geminiviruses, thereby initiating the rolling circle replication (RCR). Following cleavage, binds covalently to the 5'-phosphate of DNA as a tyrosyl ester. The cleavage gives rise to a free 3'-OH that serves as a primer for the cellular DNA polymerase. The polymerase synthesizes the (+) strand DNA by rolling circle mechanism. After one round of replication, a Rep-catalyzed nucleotidyl transfer reaction releases a circular single-stranded virus genome, thereby terminating the replication. Displays origin-specific DNA cleavage, nucleotidyl transferase, ATPase and helicase activities. The chain is Replication-associated protein from Macroptilium lathyroides (Lima bean).